A 340-amino-acid chain; its full sequence is MVSAILEGKPDKNLILVTGRIHPKLAEDVAEQLGIDVLETTAYDFANGEMYVRYTESVRGADVFVLQSHYKPINKAIMEQLIMIDALKRASARSITAVCPLLGYSRQDKKHRGREPISCRLVFDLLKTAGADRIMSVDLHAAQSQGFFDGPVDHLVAMPVLVDYIRDRFQGHLDNVAVVSPDAGRIRVAEQWAQRLGGGPLAFVHKTRDITRPNQAVANRVVGDVAGKDCVLVDDLIDTAGTIAGACHVLQDAGAKSVTVVATHGVLSGPAVERLKNCGAREVVLTDTVPIPEEKRWDGLTVLSIAPLLASAIRAVFEDGSVAELFDTYPEHHGQGFLFA.

Residues 47 to 49 (NGE) and 106 to 107 (RQ) each bind ATP. Mg(2+) is bound by residues His140 and Asp182. Lys206 is an active-site residue. D-ribose 5-phosphate-binding positions include Arg208, Asp234, and 238–242 (DTAGT).

Belongs to the ribose-phosphate pyrophosphokinase family. Class I subfamily. As to quaternary structure, homohexamer. Requires Mg(2+) as cofactor.

The protein resides in the cytoplasm. It catalyses the reaction D-ribose 5-phosphate + ATP = 5-phospho-alpha-D-ribose 1-diphosphate + AMP + H(+). Its pathway is metabolic intermediate biosynthesis; 5-phospho-alpha-D-ribose 1-diphosphate biosynthesis; 5-phospho-alpha-D-ribose 1-diphosphate from D-ribose 5-phosphate (route I): step 1/1. Functionally, involved in the biosynthesis of the central metabolite phospho-alpha-D-ribosyl-1-pyrophosphate (PRPP) via the transfer of pyrophosphoryl group from ATP to 1-hydroxyl of ribose-5-phosphate (Rib-5-P). In Bifidobacterium longum (strain NCC 2705), this protein is Ribose-phosphate pyrophosphokinase.